The following is a 315-amino-acid chain: Porphobilinogen deaminase (315 aa).

Cys241 bears the S-(dipyrrolylmethanemethyl)cysteine mark.

It belongs to the HMBS family. Monomer. The cofactor is dipyrromethane.

The catalysed reaction is 4 porphobilinogen + H2O = hydroxymethylbilane + 4 NH4(+). It participates in porphyrin-containing compound metabolism; protoporphyrin-IX biosynthesis; coproporphyrinogen-III from 5-aminolevulinate: step 2/4. Its function is as follows. Tetrapolymerization of the monopyrrole PBG into the hydroxymethylbilane pre-uroporphyrinogen in several discrete steps. The sequence is that of Porphobilinogen deaminase from Nitratidesulfovibrio vulgaris (strain DP4) (Desulfovibrio vulgaris).